Here is a 525-residue protein sequence, read N- to C-terminus: tRNA-2-methylthio-N(6)-dimethylallyladenosine synthase (525 aa).

In terms of domain architecture, MTTase N-terminal spans 14–130 (RTYQVRTYGC…LPTLLERARH (117 aa)). [4Fe-4S] cluster-binding residues include Cys23, Cys59, Cys93, Cys167, Cys171, and Cys174. Positions 153 to 400 (RESAYAGWVS…IELQERISLE (248 aa)) constitute a Radical SAM core domain. One can recognise a TRAM domain in the interval 403 to 482 (QAQVGRTLEL…PHHLIADGAL (80 aa)).

The protein belongs to the methylthiotransferase family. MiaB subfamily. In terms of assembly, monomer. The cofactor is [4Fe-4S] cluster.

The protein localises to the cytoplasm. The catalysed reaction is N(6)-dimethylallyladenosine(37) in tRNA + (sulfur carrier)-SH + AH2 + 2 S-adenosyl-L-methionine = 2-methylsulfanyl-N(6)-dimethylallyladenosine(37) in tRNA + (sulfur carrier)-H + 5'-deoxyadenosine + L-methionine + A + S-adenosyl-L-homocysteine + 2 H(+). Catalyzes the methylthiolation of N6-(dimethylallyl)adenosine (i(6)A), leading to the formation of 2-methylthio-N6-(dimethylallyl)adenosine (ms(2)i(6)A) at position 37 in tRNAs that read codons beginning with uridine. The chain is tRNA-2-methylthio-N(6)-dimethylallyladenosine synthase from Mycobacterium sp. (strain MCS).